The chain runs to 220 residues: Protein-L-isoaspartate O-methyltransferase (220 aa).

S69 is a catalytic residue.

The protein belongs to the methyltransferase superfamily. L-isoaspartyl/D-aspartyl protein methyltransferase family.

The protein localises to the cytoplasm. It catalyses the reaction [protein]-L-isoaspartate + S-adenosyl-L-methionine = [protein]-L-isoaspartate alpha-methyl ester + S-adenosyl-L-homocysteine. Functionally, catalyzes the methyl esterification of L-isoaspartyl residues in peptides and proteins that result from spontaneous decomposition of normal L-aspartyl and L-asparaginyl residues. It plays a role in the repair and/or degradation of damaged proteins. This is Protein-L-isoaspartate O-methyltransferase from Alcanivorax borkumensis (strain ATCC 700651 / DSM 11573 / NCIMB 13689 / SK2).